Reading from the N-terminus, the 95-residue chain is Histone-like DNA-binding protein (95 aa).

The protein belongs to the bacterial histone-like protein family.

The sequence is that of Histone-like DNA-binding protein from Rickettsia typhi (strain ATCC VR-144 / Wilmington).